Here is a 530-residue protein sequence, read N- to C-terminus: Chaperone Ric-8A (530 aa).

Position 435 is a phosphoserine (Ser435). Phosphothreonine is present on residues Thr440 and Thr442. Phosphoserine occurs at positions 501, 522, 523, and 527.

The protein belongs to the synembryn family. In terms of assembly, interacts with GDP-bound G alpha proteins GNAI1, GNAO1 and GNAQ, and with GNA13 with lower affinity. Does not interact with G-alpha proteins when they are in complex with subunits beta and gamma. Interacts (via C-terminus) with RGS14; the interaction stimulates the dissociation of the complex between RGS14 and the active GTP-bound form of GNAI1. Interacts with NCS1; interaction is favored in the absence of Ca(2+) and myristoylation of NCS1 is not required. In terms of processing, phosphorylated at Ser-435 and Thr-440 by CK2, stabilizing its interface with G alpha proteins.

It localises to the cytoplasm. The protein resides in the cell cortex. Its function is as follows. Chaperone that specifically binds and folds nascent G alpha proteins prior to G protein heterotrimer formation, promoting their stability and activity: folds GNAI1, GNAO1, GNA13 and GNAQ. Does not fold G(s) G-alpha proteins GNAS nor GNAL. Also acts as a guanine nucleotide exchange factor (GEF) for G alpha proteins by stimulating exchange of bound GDP for free GTP. Involved in regulation of microtubule pulling forces during mitotic movement of chromosomes by stimulating G(i)-alpha protein (GNAI1), possibly leading to release G(i)-alpha-GTP and NuMA proteins from the NuMA-GPSM2-G(i)-alpha-GDP complex. Also acts as an activator for G(q)-alpha (GNAQ) protein by enhancing the G(q)-coupled receptor-mediated ERK activation. The polypeptide is Chaperone Ric-8A (RIC8A) (Bos taurus (Bovine)).